We begin with the raw amino-acid sequence, 391 residues long: MMITKQSYKKLALMRVFVFSLSAFIFNTTEFVPIALLSDIAKSFEMESASVGLMITLYAWIVSLGSLPLMLLSAKIERKRLLLFLFGLFIVSHILSVVAWDFWVLLISRMGIALAHSVFWSITASLVIRVAPIGRKQQALGLLALGSSLAMILGLPLGRIIGQMLDWRSTFGMIGGVALLVALLMYRLLPSLPSRNAGTLSSLPVLMKRPLLVGIYLLVILAISGHFTTYSYIEPFIIQISQFSPEVATLMLFVFGLAGVMGSFLFGRFYEKNPKKFIACAIILVLCPQLLLFSFKHLEWVIFLQIFLWGIGITSLGISLQMRVLQLAPNATDVASAIFSGSYNVGIGSGALFGSIVIHQLGLGYIGFVGGALGLLALFWFNFITIKFGAK.

12 helical membrane-spanning segments follow: residues 16-36 (VFVF…PIAL), 51-71 (VGLM…PLML), 82-102 (LLFL…AWDF), 103-123 (WVLL…WSIT), 138-158 (QALG…LPLG), 170-190 (TFGM…RLLP), 210-230 (PLLV…FTTY), 247-267 (VATL…FLFG), 277-297 (FIAC…SFKH), 300-320 (WVIF…GISL), 338-358 (IFSG…SIVI), and 361-381 (LGLG…LFWF).

It belongs to the major facilitator superfamily. SotB (TC 2.A.1.2) family.

It localises to the cell inner membrane. In terms of biological role, involved in the efflux of sugars. The physiological role may be the reduction of the intracellular concentration of toxic sugars or sugar metabolites. The sequence is that of Probable sugar efflux transporter from Helicobacter acinonychis (strain Sheeba).